The sequence spans 633 residues: Chaperone protein HtpG (633 aa).

Residues 1–341 form an a; substrate-binding region; it reads MTAPHETMSF…SADLPLNVSR (341 aa). Positions 342 to 562 are b; the sequence is ELLQESRDVK…EGDMSGYLQR (221 aa). Residues 563-633 form a c region; it reads LLKQAGQKAP…YVQRVNKLLA (71 aa).

Belongs to the heat shock protein 90 family. In terms of assembly, homodimer.

It is found in the cytoplasm. Functionally, molecular chaperone. Has ATPase activity. The protein is Chaperone protein HtpG of Cupriavidus necator (strain ATCC 17699 / DSM 428 / KCTC 22496 / NCIMB 10442 / H16 / Stanier 337) (Ralstonia eutropha).